Here is a 194-residue protein sequence, read N- to C-terminus: Probable DNA-directed RNA polymerase subunit delta (194 aa).

In terms of domain architecture, HTH HARE-type spans 14–83 (LSMIEVARAI…GENKWGLRSW (70 aa)). Positions 117–194 (GDEDAIDYSD…SDDEEDEEGE (78 aa)) are disordered.

The protein belongs to the RpoE family. In terms of assembly, RNAP is composed of a core of 2 alpha, a beta and a beta' subunits. The core is associated with a delta subunit and one of several sigma factors.

Its function is as follows. Participates in both the initiation and recycling phases of transcription. In the presence of the delta subunit, RNAP displays an increased specificity of transcription, a decreased affinity for nucleic acids, and an increased efficiency of RNA synthesis because of enhanced recycling. This Streptococcus mutans serotype c (strain ATCC 700610 / UA159) protein is Probable DNA-directed RNA polymerase subunit delta.